Here is a 195-residue protein sequence, read N- to C-terminus: SPbeta prophage-derived uncharacterized protein YotM (195 aa).

The protein is SPbeta prophage-derived uncharacterized protein YotM (yotM) of Bacillus subtilis (strain 168).